Consider the following 112-residue polypeptide: ATP-dependent Clp protease adapter protein ClpS (112 aa).

It belongs to the ClpS family. As to quaternary structure, binds to the N-terminal domain of the chaperone ClpA.

In terms of biological role, involved in the modulation of the specificity of the ClpAP-mediated ATP-dependent protein degradation. This chain is ATP-dependent Clp protease adapter protein ClpS, found in Rhodococcus jostii (strain RHA1).